Reading from the N-terminus, the 85-residue chain is Neurotoxin beta-KTx 17 (85 aa).

An N-terminal signal peptide occupies residues 1-20 (MKQYIFFLALIVLVSTFAEA). Residues 21 to 37 (GKKTEILDKVKKVFSKG) constitute a propeptide that is removed on maturation. A BetaSPN-type CS-alpha/beta domain is found at 49-85 (ELGCPFIEKWCEDHCESKKQVGKCENFDCSCVKLGGK). 3 disulfides stabilise this stretch: Cys-52-Cys-72, Cys-59-Cys-77, and Cys-63-Cys-79.

It belongs to the long chain scorpion toxin family. Class 2 subfamily. Expressed by the venom gland.

Its subcellular location is the secreted. Has a very weak effect to block voltage-gated potassium channel Kv1.1/KCNA1. The polypeptide is Neurotoxin beta-KTx 17 (Lychas mucronatus (Chinese swimming scorpion)).